The chain runs to 78 residues: Small ribosomal subunit protein bS18 (78 aa).

This sequence belongs to the bacterial ribosomal protein bS18 family. As to quaternary structure, part of the 30S ribosomal subunit. Forms a tight heterodimer with protein bS6.

Binds as a heterodimer with protein bS6 to the central domain of the 16S rRNA, where it helps stabilize the platform of the 30S subunit. The chain is Small ribosomal subunit protein bS18 from Levilactobacillus brevis (strain ATCC 367 / BCRC 12310 / CIP 105137 / JCM 1170 / LMG 11437 / NCIMB 947 / NCTC 947) (Lactobacillus brevis).